The sequence spans 264 residues: Glutamate racemase (264 aa).

Substrate contacts are provided by residues 10–11 (DS) and 42–43 (YG). The active-site Proton donor/acceptor is C73. 74–75 (NT) contacts substrate. Catalysis depends on C183, which acts as the Proton donor/acceptor. 184-185 (TH) serves as a coordination point for substrate.

Belongs to the aspartate/glutamate racemases family.

The catalysed reaction is L-glutamate = D-glutamate. It participates in cell wall biogenesis; peptidoglycan biosynthesis. Provides the (R)-glutamate required for cell wall biosynthesis. This chain is Glutamate racemase, found in Streptococcus pyogenes serotype M49 (strain NZ131).